A 304-amino-acid polypeptide reads, in one-letter code: HTH-type transcriptional regulator TtuA (304 aa).

One can recognise an HTH lysR-type domain in the interval 1 to 58; it reads MELEQLKCFVAAAEELHFGRAAQKMGILPASLGRHLRLLEESLGTRLMSRTTRSVALT. Residues 18-37 constitute a DNA-binding region (H-T-H motif); it reads FGRAAQKMGILPASLGRHLR.

It belongs to the LysR transcriptional regulatory family.

Transcriptional regulator of the ttuABCDE tartrate utilization operon. This chain is HTH-type transcriptional regulator TtuA (ttuA), found in Agrobacterium vitis (Rhizobium vitis).